We begin with the raw amino-acid sequence, 420 residues long: MSDLHKAFAKSKLAKLPPEAPLLSESSSMNHPAESSHDEDSSSVSSTGTVIPSPSRQLFARASQGSSDSSSLSWSDFFAKELFLTRETDTLRIIHHVYLTPPTDSGPLFVMHHGAGSSGLSFATCAEEIRKILPKAGILSLDARDHGRTSVQRTDGGAAELDLSLETLNQDLVYVARKTQAEMGWEELPDLVLVGHSLGGAVITDVAKKGELGNKVLAYAVLDVVEGSAMDALQSMEKYLSTRPSRFPSLTSGVEWHTRSRTIRNRASARVSVPSLLYKEETPSDPAKPWVWRTNLSATKPFWEDWFIGLSRKFLEARGGKLLLLAGTDRLDKELMIGQMQGKYQLQVLPEAGHFIQEDMPAKTAQILVDFYKRNDRSALVLPPKVADMRASAAMQKGAGAGASFSALHGGSSAGHLHKP.

2 stretches are compositionally biased toward low complexity: residues 18–28 (PEAPLLSESSS) and 42–51 (SSVSSTGTVI). Residues 18–51 (PEAPLLSESSSMNHPAESSHDEDSSSVSSTGTVI) form a disordered region. Catalysis depends on residues Ser-197, Asp-223, and His-354.

This sequence belongs to the AB hydrolase superfamily.

The enzyme catalyses [phosphatase 2A protein]-C-terminal L-leucine methyl ester + H2O = [phosphatase 2A protein]-C-terminal L-leucine + methanol + H(+). Its function is as follows. Demethylates proteins that have been reversibly carboxymethylated. Demethylates the phosphatase PP2A catalytic subunit. The polypeptide is Protein phosphatase methylesterase 1 (ppe1) (Aspergillus fumigatus (strain ATCC MYA-4609 / CBS 101355 / FGSC A1100 / Af293) (Neosartorya fumigata)).